We begin with the raw amino-acid sequence, 447 residues long: Phosphoglucosamine mutase (447 aa).

Serine 104 (phosphoserine intermediate) is an active-site residue. The Mg(2+) site is built by serine 104, aspartate 243, aspartate 245, and aspartate 247. Phosphoserine is present on serine 104.

Belongs to the phosphohexose mutase family. Requires Mg(2+) as cofactor. Activated by phosphorylation.

It carries out the reaction alpha-D-glucosamine 1-phosphate = D-glucosamine 6-phosphate. Functionally, catalyzes the conversion of glucosamine-6-phosphate to glucosamine-1-phosphate. In Corynebacterium jeikeium (strain K411), this protein is Phosphoglucosamine mutase.